Consider the following 134-residue polypeptide: Calcitonin gene-related peptide 2 (134 aa).

Positions 1-26 (MDFWKFFPFLALSSMWVLCLASSLQA) are cleaved as a signal peptide. Residues 27–86 (APFRSALESSLDLGTLSDQEKHLLLAALIQDYEQKARKLEQEEQETEGSRKGSSSSVISQ) constitute a propeptide that is removed on maturation. The segment at 65 to 91 (LEQEEQETEGSRKGSSSSVISQKRSCN) is disordered. The segment covering 77–89 (KGSSSSVISQKRS) has biased composition (low complexity). The cysteines at positions 90 and 95 are disulfide-linked. Residue F125 is modified to Phenylalanine amide. The propeptide occupies 131–134 (DLRV).

The protein belongs to the calcitonin family.

It localises to the secreted. Functionally, CALCB/CGRP2 is a peptide hormone that induces vasodilation mediated by the CALCRL-RAMP1 receptor complex. Dilates a variety of vessels including the coronary, cerebral and systemic vasculature. Its abundance in the CNS also points toward a neurotransmitter or neuromodulator role. This is Calcitonin gene-related peptide 2 from Rattus norvegicus (Rat).